The following is a 54-amino-acid chain: UPF0434 protein BCI_0256 (54 aa).

It belongs to the UPF0434 family.

This chain is UPF0434 protein BCI_0256, found in Baumannia cicadellinicola subsp. Homalodisca coagulata.